Reading from the N-terminus, the 601-residue chain is Elongation factor 4 (601 aa).

The tr-type G domain occupies 6 to 188 (SHIRNFSIIA…QIVHRVPAPE (183 aa)). GTP contacts are provided by residues 18–23 (DHGKST) and 135–138 (NKID).

Belongs to the TRAFAC class translation factor GTPase superfamily. Classic translation factor GTPase family. LepA subfamily.

It localises to the cell inner membrane. It catalyses the reaction GTP + H2O = GDP + phosphate + H(+). Functionally, required for accurate and efficient protein synthesis under certain stress conditions. May act as a fidelity factor of the translation reaction, by catalyzing a one-codon backward translocation of tRNAs on improperly translocated ribosomes. Back-translocation proceeds from a post-translocation (POST) complex to a pre-translocation (PRE) complex, thus giving elongation factor G a second chance to translocate the tRNAs correctly. Binds to ribosomes in a GTP-dependent manner. The polypeptide is Elongation factor 4 (Anaeromyxobacter dehalogenans (strain 2CP-1 / ATCC BAA-258)).